Reading from the N-terminus, the 439-residue chain is Hydrogenobyrinate a,c-diamide synthase (439 aa).

Residues 247 to 439 (RIALAEDGAF…FFHAIARASA (193 aa)) form the GATase cobBQ-type domain. The active-site Nucleophile is the cysteine 329.

The protein belongs to the CobB/CbiA family. The cofactor is Mg(2+).

The enzyme catalyses hydrogenobyrinate + 2 L-glutamine + 2 ATP + 2 H2O = hydrogenobyrinate a,c-diamide + 2 L-glutamate + 2 ADP + 2 phosphate + 2 H(+). It functions in the pathway cofactor biosynthesis; adenosylcobalamin biosynthesis; cob(II)yrinate a,c-diamide from precorrin-2 (aerobic route): step 9/10. Catalyzes the ATP-dependent amidation of the two carboxylate groups at positions a and c of hydrogenobyrinate, using either L-glutamine or ammonia as the nitrogen source. This chain is Hydrogenobyrinate a,c-diamide synthase, found in Mesorhizobium japonicum (strain LMG 29417 / CECT 9101 / MAFF 303099) (Mesorhizobium loti (strain MAFF 303099)).